The primary structure comprises 717 residues: Cell division cycle protein 27 homolog A (717 aa).

Over residues 198 to 208 (TEHIPGENQQD) the composition is skewed to polar residues. 3 disordered regions span residues 198–217 (TEHI…QPGD), 282–315 (LSAE…KDSH), and 342–374 (SKEA…SPDR). Basic residues predominate over residues 293-304 (RRSARIAARKKN). Polar residues predominate over residues 342–356 (SKEATTSGQSVSDIG). TPR repeat units lie at residues 421-454 (HWVL…YPYA), 489-522 (PESW…NERF), 524-556 (YAHT…DTRH), 557-590 (YNAW…NPRS), 592-624 (VIMC…DAKN), 625-658 (PLPK…APQE), and 659-692 (SSVH…SPSP).

This sequence belongs to the APC3/CDC27 family. As to quaternary structure, the APC/C is composed of at least 10 subunits. Interacts with APC2 and APC10.

Its subcellular location is the nucleus. It functions in the pathway protein modification; protein ubiquitination. Component of the anaphase promoting complex/cyclosome (APC/C), a cell cycle-regulated E3 ubiquitin-protein ligase complex that controls progression through mitosis and the G1 phase of the cell cycle. The APC/C complex controls several key steps in the cell cycle by mediating ubiquitination and subsequent degradation of target proteins such as cyclins. The APC/C complex is required for the female gametophyte development and is involved in several aspect of development by controlling cell division and cell elongation. Involved in the control of endoreduplication. Functionally redundant with CDC27B in the control of gametophyte development. The sequence is that of Cell division cycle protein 27 homolog A (CDC27A) from Arabidopsis thaliana (Mouse-ear cress).